The chain runs to 87 residues: Small ribosomal subunit protein uS19 (87 aa).

Belongs to the universal ribosomal protein uS19 family.

In terms of biological role, protein S19 forms a complex with S13 that binds strongly to the 16S ribosomal RNA. The protein is Small ribosomal subunit protein uS19 (rpsS) of Mycoplasma pneumoniae (strain ATCC 29342 / M129 / Subtype 1) (Mycoplasmoides pneumoniae).